A 225-amino-acid polypeptide reads, in one-letter code: 3-dehydroquinate dehydratase (225 aa).

Residues 30–32 (EWR) and Arg62 each bind 3-dehydroquinate. Residue His118 is the Proton donor/acceptor of the active site. The active-site Schiff-base intermediate with substrate is Lys143. Positions 186, 205, and 209 each coordinate 3-dehydroquinate.

The protein belongs to the type-I 3-dehydroquinase family. As to quaternary structure, homodimer.

The enzyme catalyses 3-dehydroquinate = 3-dehydroshikimate + H2O. The protein operates within metabolic intermediate biosynthesis; chorismate biosynthesis; chorismate from D-erythrose 4-phosphate and phosphoenolpyruvate: step 3/7. Functionally, involved in the third step of the chorismate pathway, which leads to the biosynthesis of aromatic amino acids. Catalyzes the cis-dehydration of 3-dehydroquinate (DHQ) and introduces the first double bond of the aromatic ring to yield 3-dehydroshikimate. The chain is 3-dehydroquinate dehydratase from Streptococcus mutans serotype c (strain ATCC 700610 / UA159).